The primary structure comprises 2202 residues: Nonribosomal peptide synthetase 5 (2202 aa).

The adenylation 1 stretch occupies residues 58–443; sequence TYAQLDALSD…LLSYDKVDSA (386 aa). A Carrier 1 domain is found at 517–593; the sequence is ERGLGAVESV…NIAAAVVELS (77 aa). Position 554 is an O-(pantetheine 4'-phosphoryl)serine (Ser-554). The segment at 625–918 is condensation 1; it reads IAPMTDMQTR…INTLPLAINT (294 aa). The adenylation 2 stretch occupies residues 1105-1482; it reads TYREFGRMTE…EVQSTISKLA (378 aa). Residues 1563–1643 enclose the Carrier 2 domain; it reads DLETDTQRVL…DLSLAIDELV (81 aa). Ser-1602 is modified (O-(pantetheine 4'-phosphoryl)serine). The interval 1664–1952 is condensation 2; that stretch reads GQLPLSYLEK…FLDRLLLRIQ (289 aa). The disordered stretch occupies residues 2103–2129; it reads PVGLTPSHEGSAELTNGTNKTDSTTGQ. A compositionally biased stretch (polar residues) spans 2115–2129; sequence ELTNGTNKTDSTTGQ. In terms of domain architecture, Carrier 3 spans 2130–2202; it reads QELENNLTDV…LELATCAVII (73 aa). Ser-2164 is modified (O-(pantetheine 4'-phosphoryl)serine).

It belongs to the NRP synthetase family.

Nonribosomal peptide synthesis (NRPS) is a key mechanism responsible for the biosynthesis of bioactive metabolites which are potentially contributing to organismal virulence. This Aspergillus fumigatus (strain ATCC MYA-4609 / CBS 101355 / FGSC A1100 / Af293) (Neosartorya fumigata) protein is Nonribosomal peptide synthetase 5 (NRPS5).